The primary structure comprises 112 residues: uncharacterized protein (112 aa).

2 helical membrane-spanning segments follow: residues 44–63 (VITG…LHSL) and 68–90 (LAAL…KLVH).

It localises to the cell membrane. This is an uncharacterized protein from Archaeoglobus fulgidus (strain ATCC 49558 / DSM 4304 / JCM 9628 / NBRC 100126 / VC-16).